The chain runs to 500 residues: Gamma-glutamylanilide synthase (500 aa).

Residues 32–136 (LGLEMIRLSW…MLADLHWKSG (105 aa)) form the GS beta-grasp domain. Positions 143-500 (PRGIMKKAVK…WEQKEYFNLL (358 aa)) constitute a GS catalytic domain.

The protein belongs to the glutamine synthetase family. Homohexamer.

It carries out the reaction aniline + L-glutamate + ATP = N(5)-phenyl-L-glutamine + ADP + phosphate. Its function is as follows. Involved in the initial oxidation of aniline to catechol by the release of its amino group. Catalyzes the ATP-dependent ligation of L-glutamate to aniline to yield gamma-glutamylanilide (gamma-GA). AtdA1 has a broad substrate range and is able to convert the following anilines, including chlorinated and methylated forms of aniline: aniline (100%), o-chloroaniline (92%), m-chloroaniline (69%), p-chloroaniline (92%), o-methylaniline (40%), m-methylaniline (27%) and p-methylaniline (45%). The polypeptide is Gamma-glutamylanilide synthase (Acinetobacter sp).